The sequence spans 559 residues: MELSRSAAWSALVFHKHEVDKKTMRDMFAGDSDRFVKFSLSWKEMLLDYSKNRITSRTMELLLELAHSAGVDEKRQQMFQGAPINFTENRSVLHTALRRPPGYVLEVDGLNIGDEIAGVLFQMKNFCEKVISGKWKGYTGKSITDVVNIGIGGSDLGPYMVTEALKPFAHGGLDVHFVSNIDGTHIRETLKRLDPETTLFIIASKTFTTQETLTNAMSAREWFLARAVEEEYIKKHFAAVSTNQEKVVEFGIDDANMFRFWDWVGGRYSLWSSIGLSIALYLGFNRFEELLAGAHAMDEHFLNEPFNRNIPVILALLGIWYRNFFDAASHAVIPYDQYLHRFPAYLQQLDMESNGKRVDENGHTVTHATGPVIWGEPGTNAQHAFFQLLHQGPDLIPADFIVPLKSQNPSGEHHDMLLANCFAQTEALMKGKTEQEVRAELSDAGYDEADIQKLFQHKVFSGNRPTNTILVHELNPFMLGSLIAMYEHKVFVQGVIWRINSFDQWGVELGKQLARTILPEIQSAEAVTAHDASTNALINMARTFREENIRKESAQLSFF.

Glu352 functions as the Proton donor in the catalytic mechanism. Residues His383 and Lys511 contribute to the active site.

Belongs to the GPI family.

It is found in the cytoplasm. The catalysed reaction is alpha-D-glucose 6-phosphate = beta-D-fructose 6-phosphate. It functions in the pathway carbohydrate biosynthesis; gluconeogenesis. It participates in carbohydrate degradation; glycolysis; D-glyceraldehyde 3-phosphate and glycerone phosphate from D-glucose: step 2/4. Functionally, catalyzes the reversible isomerization of glucose-6-phosphate to fructose-6-phosphate. The polypeptide is Glucose-6-phosphate isomerase (Chlorobium phaeobacteroides (strain DSM 266 / SMG 266 / 2430)).